The sequence spans 247 residues: T-cell surface glycoprotein CD8 alpha chain (247 aa).

A signal peptide spans 1–27 (MASPLTRFLSLNLLLLGESIILGSGEA). Positions 28 to 139 (KPQAPELRIF…SVISNSVMYF (112 aa)) constitute an Ig-like V-type domain. Over 28-196 (KPQAPELRIF…TGLDFACDIY (169 aa)) the chain is Extracellular. Cysteines 53 and 129 form a disulfide. N-linked (GlcNAc...) asparagine glycans are attached at residues Asn-69, Asn-97, and Asn-150. The interval 156–182 (PVLRTPSPVHPTGTSQPQRPEDCRPRG) is disordered. Residues 197-217 (IWAPLAGICVALLLSLIITLI) form a helical membrane-spanning segment. Topologically, residues 218–247 (CYHRSRKRVCKCPRPLVRQEGKPRPSEKIV) are cytoplasmic.

Forms disulfide-linked heterodimers with CD8B at the cell surface. Also forms homodimers in several cell types including NK-cells or peripheral blood T-lymphocytes. Interacts with the MHC class I HLA-A/B2M dimer. Interacts with LCK in a zinc-dependent manner. Post-translationally, palmitoylated, but association with CD8B seems to be more important for the enrichment of CdD8A in lipid rafts. In terms of processing, phosphorylated in cytotoxic T-lymphocytes (CTLs) following activation.

Its subcellular location is the cell membrane. Integral membrane glycoprotein that plays an essential role in the immune response and serves multiple functions in responses against both external and internal offenses. In T-cells, functions primarily as a coreceptor for MHC class I molecule:peptide complex. The antigens presented by class I peptides are derived from cytosolic proteins while class II derived from extracellular proteins. Interacts simultaneously with the T-cell receptor (TCR) and the MHC class I proteins presented by antigen presenting cells (APCs). In turn, recruits the Src kinase LCK to the vicinity of the TCR-CD3 complex. LCK then initiates different intracellular signaling pathways by phosphorylating various substrates ultimately leading to lymphokine production, motility, adhesion and activation of cytotoxic T-lymphocytes (CTLs). This mechanism enables CTLs to recognize and eliminate infected cells and tumor cells. In NK-cells, the presence of CD8A homodimers at the cell surface provides a survival mechanism allowing conjugation and lysis of multiple target cells. CD8A homodimer molecules also promote the survival and differentiation of activated lymphocytes into memory CD8 T-cells. The protein is T-cell surface glycoprotein CD8 alpha chain (Cd8a) of Mus musculus (Mouse).